We begin with the raw amino-acid sequence, 218 residues long: Adenylate kinase (218 aa).

10–15 (GAGKGT) contacts ATP. An NMP region spans residues 30-59 (STGDMLRAAVKAGTPLGQQAKAVMDAGKLV). AMP-binding positions include threonine 31, arginine 36, 57–59 (KLV), 85–88 (GFPR), and glutamine 92. The segment at 122 to 159 (GRRSHPASGRTYHVKFNPPKVEGKDDVTGEDLIQREDD) is LID. ATP is bound by residues arginine 123 and 132 to 133 (TY). Residues 127 to 147 (PASGRTYHVKFNPPKVEGKDD) are disordered. 2 residues coordinate AMP: arginine 156 and arginine 167. Residue glycine 203 participates in ATP binding.

It belongs to the adenylate kinase family. As to quaternary structure, monomer.

The protein resides in the cytoplasm. It catalyses the reaction AMP + ATP = 2 ADP. It participates in purine metabolism; AMP biosynthesis via salvage pathway; AMP from ADP: step 1/1. Functionally, catalyzes the reversible transfer of the terminal phosphate group between ATP and AMP. Plays an important role in cellular energy homeostasis and in adenine nucleotide metabolism. This Paracidovorax citrulli (strain AAC00-1) (Acidovorax citrulli) protein is Adenylate kinase.